The following is a 151-amino-acid chain: Shadow of prion protein (151 aa).

The first 24 residues, 1–24 (MNWAPATCWALLLAAAFLCDSGAA), serve as a signal peptide directing secretion. Residues 89–113 (WRRAAGPGERGLEDEEDGVPGGNGT) form a disordered region. Asn111 is a glycosylation site (N-linked (GlcNAc...) asparagine). Residue Gly126 is the site of GPI-anchor amidated glycine attachment. A propeptide spans 127 to 151 (AGPTRGPRLCLVLGGALGALGLLRP) (removed in mature form).

This sequence belongs to the SPRN family. Post-translationally, N-glycosylated. Mainly expressed in brain. In brain, it is expressed in hippocampus.

The protein localises to the cell membrane. In terms of biological role, prion-like protein that has PrP(C)-like neuroprotective activity. May act as a modulator for the biological actions of normal and abnormal PrP. This Homo sapiens (Human) protein is Shadow of prion protein (SPRN).